The primary structure comprises 503 residues: Protein FAM124A (503 aa).

The segment at 434 to 470 (LAQSDTVPGRQNHSSDSLHSVSDISSSPCPVFPSTPA) is disordered. A compositionally biased stretch (polar residues) spans 436-445 (QSDTVPGRQN). Residues 447–460 (SSDSLHSVSDISSS) show a composition bias toward low complexity.

Belongs to the FAM124 family.

The protein is Protein FAM124A (fam124a) of Xenopus tropicalis (Western clawed frog).